Consider the following 432-residue polypeptide: Trigger factor (432 aa).

The PPIase FKBP-type domain maps to 161-246 (GKRVSIDFVG…VNKVEARQLP (86 aa)).

Belongs to the FKBP-type PPIase family. Tig subfamily.

The protein localises to the cytoplasm. It catalyses the reaction [protein]-peptidylproline (omega=180) = [protein]-peptidylproline (omega=0). Functionally, involved in protein export. Acts as a chaperone by maintaining the newly synthesized protein in an open conformation. Functions as a peptidyl-prolyl cis-trans isomerase. The chain is Trigger factor from Vibrio vulnificus (strain CMCP6).